The chain runs to 127 residues: Aspartate 1-decarboxylase (127 aa).

Catalysis depends on S25, which acts as the Schiff-base intermediate with substrate; via pyruvic acid. Position 25 is a pyruvic acid (Ser) (S25). Position 57 (T57) interacts with substrate. The Proton donor role is filled by Y58. 73–75 (GAA) is a binding site for substrate.

It belongs to the PanD family. As to quaternary structure, heterooctamer of four alpha and four beta subunits. Pyruvate is required as a cofactor. Post-translationally, is synthesized initially as an inactive proenzyme, which is activated by self-cleavage at a specific serine bond to produce a beta-subunit with a hydroxyl group at its C-terminus and an alpha-subunit with a pyruvoyl group at its N-terminus.

The protein localises to the cytoplasm. The enzyme catalyses L-aspartate + H(+) = beta-alanine + CO2. It participates in cofactor biosynthesis; (R)-pantothenate biosynthesis; beta-alanine from L-aspartate: step 1/1. In terms of biological role, catalyzes the pyruvoyl-dependent decarboxylation of aspartate to produce beta-alanine. This chain is Aspartate 1-decarboxylase, found in Desulfitobacterium hafniense (strain DSM 10664 / DCB-2).